The following is a 739-amino-acid chain: Eukaryotic translation initiation factor 3 subunit B (739 aa).

An RRM domain is found at 39-125; it reads AFVVIDGLPV…HTLAVNKLTD (87 aa). WD repeat units lie at residues 191–229, 231–288, 457–498, 516–559, and 574–612; these read RDHW…KQKQ, PHPF…RSFV, SLKD…SFFA, IEKK…EKPE, and NEHF…HTFS.

Belongs to the eIF-3 subunit B family. Component of the eukaryotic translation initiation factor 3 (eIF-3) complex.

Its subcellular location is the cytoplasm. Its function is as follows. RNA-binding component of the eukaryotic translation initiation factor 3 (eIF-3) complex, which is involved in protein synthesis of a specialized repertoire of mRNAs and, together with other initiation factors, stimulates binding of mRNA and methionyl-tRNAi to the 40S ribosome. The eIF-3 complex specifically targets and initiates translation of a subset of mRNAs involved in cell proliferation. In Coccidioides immitis (strain RS) (Valley fever fungus), this protein is Eukaryotic translation initiation factor 3 subunit B.